The following is a 61-amino-acid chain: uncharacterized protein (61 aa).

This is an uncharacterized protein from Methanocaldococcus jannaschii (strain ATCC 43067 / DSM 2661 / JAL-1 / JCM 10045 / NBRC 100440) (Methanococcus jannaschii).